A 412-amino-acid chain; its full sequence is Multifunctional CCA protein (412 aa).

Glycine 8 and arginine 11 together coordinate ATP. CTP contacts are provided by glycine 8 and arginine 11. Residues aspartate 21 and aspartate 23 each contribute to the Mg(2+) site. Arginine 91, arginine 137, and arginine 140 together coordinate ATP. The CTP site is built by arginine 91, arginine 137, and arginine 140. The HD domain maps to 228–329; it reads TGIHTLMTLS…VKLFDSIDAW (102 aa).

This sequence belongs to the tRNA nucleotidyltransferase/poly(A) polymerase family. Bacterial CCA-adding enzyme type 1 subfamily. Monomer. Can also form homodimers and oligomers. Mg(2+) is required as a cofactor. Requires Ni(2+) as cofactor.

The enzyme catalyses a tRNA precursor + 2 CTP + ATP = a tRNA with a 3' CCA end + 3 diphosphate. The catalysed reaction is a tRNA with a 3' CCA end + 2 CTP + ATP = a tRNA with a 3' CCACCA end + 3 diphosphate. Its function is as follows. Catalyzes the addition and repair of the essential 3'-terminal CCA sequence in tRNAs without using a nucleic acid template. Adds these three nucleotides in the order of C, C, and A to the tRNA nucleotide-73, using CTP and ATP as substrates and producing inorganic pyrophosphate. tRNA 3'-terminal CCA addition is required both for tRNA processing and repair. Also involved in tRNA surveillance by mediating tandem CCA addition to generate a CCACCA at the 3' terminus of unstable tRNAs. While stable tRNAs receive only 3'-terminal CCA, unstable tRNAs are marked with CCACCA and rapidly degraded. The sequence is that of Multifunctional CCA protein from Shigella sonnei (strain Ss046).